A 180-amino-acid polypeptide reads, in one-letter code: Large ribosomal subunit protein uL6 (180 aa).

The protein belongs to the universal ribosomal protein uL6 family. Part of the 50S ribosomal subunit.

Functionally, this protein binds to the 23S rRNA, and is important in its secondary structure. It is located near the subunit interface in the base of the L7/L12 stalk, and near the tRNA binding site of the peptidyltransferase center. The chain is Large ribosomal subunit protein uL6 from Clostridioides difficile (strain 630) (Peptoclostridium difficile).